Consider the following 176-residue polypeptide: Cathelicidin-2 (176 aa).

An N-terminal signal peptide occupies residues methionine 1–alanine 29. Glutamine 30 carries the pyrrolidone carboxylic acid modification. Positions glutamine 30–valine 130 are excised as a propeptide. 2 disulfide bridges follow: cysteine 85/cysteine 96 and cysteine 107/cysteine 124. The segment at isoleucine 157 to arginine 176 is disordered. At proline 173 the chain carries Proline amide. Residues glycine 174–arginine 176 constitute a propeptide, removed in mature form.

This sequence belongs to the cathelicidin family. Post-translationally, elastase is responsible for its maturation. In terms of tissue distribution, large granules of neutrophils.

It localises to the secreted. Functionally, exerts, in vitro, a potent antimicrobial activity. Probably due to an impairment of the function of the respiratory chain and of energy-dependent activities in the inner membrane of susceptible microorganisms. The sequence is that of Cathelicidin-2 (CATHL2) from Bos taurus (Bovine).